The following is a 486-amino-acid chain: Probable glycine dehydrogenase (decarboxylating) subunit 2 (486 aa).

Lys-269 carries the N6-(pyridoxal phosphate)lysine modification.

It belongs to the GcvP family. C-terminal subunit subfamily. In terms of assembly, the glycine cleavage system is composed of four proteins: P, T, L and H. In this organism, the P 'protein' is a heterodimer of two subunits. The cofactor is pyridoxal 5'-phosphate.

It catalyses the reaction N(6)-[(R)-lipoyl]-L-lysyl-[glycine-cleavage complex H protein] + glycine + H(+) = N(6)-[(R)-S(8)-aminomethyldihydrolipoyl]-L-lysyl-[glycine-cleavage complex H protein] + CO2. The glycine cleavage system catalyzes the degradation of glycine. The P protein binds the alpha-amino group of glycine through its pyridoxal phosphate cofactor; CO(2) is released and the remaining methylamine moiety is then transferred to the lipoamide cofactor of the H protein. The protein is Probable glycine dehydrogenase (decarboxylating) subunit 2 of Chlorobaculum tepidum (strain ATCC 49652 / DSM 12025 / NBRC 103806 / TLS) (Chlorobium tepidum).